Reading from the N-terminus, the 149-residue chain is Cytochrome c' (149 aa).

A signal peptide spans 1–19 (MRRVLLATLMAALPAAAMA). Arginine 29, threonine 89, alanine 90, cysteine 138, cysteine 141, and histidine 142 together coordinate heme c.

In terms of assembly, monomer and homodimer. Binds 1 heme c group covalently per subunit.

In terms of biological role, cytochrome c' is the most widely occurring bacterial c-type cytochrome. Cytochromes c' are high-spin proteins and the heme has no sixth ligand. Their exact function is not known. The polypeptide is Cytochrome c' (cycP) (Cereibacter sphaeroides (strain ATCC 17023 / DSM 158 / JCM 6121 / CCUG 31486 / LMG 2827 / NBRC 12203 / NCIMB 8253 / ATH 2.4.1.) (Rhodobacter sphaeroides)).